Reading from the N-terminus, the 335-residue chain is MTEIHDFDKSEWDIKGSIAPIQPTTYSDGRLVPQVRVTDPGLGDRKDECFMYMFLLGVVEDSDPLGPPIGRAFGSLPLGVGRSTAKPEELLKEATELDIVVRRIAGLNEKLVFYNNPPLTLLTPWRKVLTTGSVFNANQVCNAVNLIPLDTPQRFRVVYMSITRLSDNGYYTVPRRMLEFKSVNAVAFKLLVTLRIHKAIGPGKIIDNAEQLPEATFMVHIGNFRRKKSEVYSADYCKMKIEKMGLVFALGGIGGTSLHIRSTGKMNKTLHAQLGFKKTLCYPLMDINEDPNRLLWRSRCKTIRIQAVLQPSVPQEFRIYDDVIINDDQGLFKVL.

The protein belongs to the morbillivirus/respirovirus/rubulavirus M protein family. Homodimer. Dimerization is critical for virion formation. Interacts with host ANP32B.

Its subcellular location is the virion. It is found in the host cell membrane. The M protein has a crucial role in virus assembly and interacts with the RNP complex as well as with the viral membrane. Associates with phosphatidylserine (PS) and phosphatidylinositol 4,5-bisphosphate (PIP2) at the plasma membrane. Interaction with PIP2 triggers matrix protein lattice polymerization. Matrix proteins induce host membrane deformation and curvature necessary for virion assembly/budding. This is Matrix protein (M) from Measles virus (strain IP-3-Ca) (MeV).